The following is a 299-amino-acid chain: Hemolysin C homolog (299 aa).

CBS domains lie at 80-142 (MVPR…NGRL) and 145-202 (LIRK…IDDE).

Belongs to the UPF0053 family. Hemolysin C subfamily.

In Rickettsia rickettsii (strain Sheila Smith), this protein is Hemolysin C homolog (tlyC).